A 90-amino-acid polypeptide reads, in one-letter code: Probable Fe(2+)-trafficking protein (90 aa).

This sequence belongs to the Fe(2+)-trafficking protein family.

Could be a mediator in iron transactions between iron acquisition and iron-requiring processes, such as synthesis and/or repair of Fe-S clusters in biosynthetic enzymes. This Albidiferax ferrireducens (strain ATCC BAA-621 / DSM 15236 / T118) (Rhodoferax ferrireducens) protein is Probable Fe(2+)-trafficking protein.